The following is a 274-amino-acid chain: MTLQEEIIRQLGVKASIAPQEEIRKTVDFLKAYLRKHSFLKTYVLGISGGQDSTLAGKLAQMAIAELREETSDQAYQFIAVRLPYGVQTDEADAQKALAFIMPDQTLTINIKAAVDGQVEALQAAGVEISDFNKGNIKARQRMISQYAIAGQMAGAVIGTDHAAENITGFFTKFGDGGADILPLFRLNKRQGKALLKVLGADAALYEKVPTADLEDQKPGLADEVALGVTYQDIDDYLEGKLISKVAQATIEKWWHKGQHKRHLPITIFDDFWK.

46-53 (GISGGQDS) contributes to the ATP binding site. A Mg(2+)-binding site is contributed by aspartate 52. Arginine 140 serves as a coordination point for deamido-NAD(+). Threonine 160 serves as a coordination point for ATP. Glutamate 165 is a binding site for Mg(2+). Residues lysine 173 and aspartate 180 each contribute to the deamido-NAD(+) site. ATP is bound by residues lysine 189 and threonine 211. 260–261 (HK) serves as a coordination point for deamido-NAD(+).

It belongs to the NAD synthetase family. Homodimer.

The catalysed reaction is deamido-NAD(+) + NH4(+) + ATP = AMP + diphosphate + NAD(+) + H(+). The protein operates within cofactor biosynthesis; NAD(+) biosynthesis; NAD(+) from deamido-NAD(+) (ammonia route): step 1/1. Catalyzes the ATP-dependent amidation of deamido-NAD to form NAD. Uses ammonia as a nitrogen source. This Streptococcus pyogenes serotype M3 (strain ATCC BAA-595 / MGAS315) protein is NH(3)-dependent NAD(+) synthetase.